Reading from the N-terminus, the 346-residue chain is N-acetyl-gamma-glutamyl-phosphate reductase (346 aa).

Residue C149 is part of the active site.

This sequence belongs to the NAGSA dehydrogenase family. Type 1 subfamily.

Its subcellular location is the cytoplasm. It carries out the reaction N-acetyl-L-glutamate 5-semialdehyde + phosphate + NADP(+) = N-acetyl-L-glutamyl 5-phosphate + NADPH + H(+). It participates in amino-acid biosynthesis; L-arginine biosynthesis; N(2)-acetyl-L-ornithine from L-glutamate: step 3/4. In terms of biological role, catalyzes the NADPH-dependent reduction of N-acetyl-5-glutamyl phosphate to yield N-acetyl-L-glutamate 5-semialdehyde. The polypeptide is N-acetyl-gamma-glutamyl-phosphate reductase (Geotalea daltonii (strain DSM 22248 / JCM 15807 / FRC-32) (Geobacter daltonii)).